We begin with the raw amino-acid sequence, 446 residues long: Exodeoxyribonuclease 7 large subunit (446 aa).

The protein belongs to the XseA family. As to quaternary structure, heterooligomer composed of large and small subunits.

Its subcellular location is the cytoplasm. It catalyses the reaction Exonucleolytic cleavage in either 5'- to 3'- or 3'- to 5'-direction to yield nucleoside 5'-phosphates.. Bidirectionally degrades single-stranded DNA into large acid-insoluble oligonucleotides, which are then degraded further into small acid-soluble oligonucleotides. This Streptococcus pyogenes serotype M49 (strain NZ131) protein is Exodeoxyribonuclease 7 large subunit.